We begin with the raw amino-acid sequence, 145 residues long: D-aminoacyl-tRNA deacylase (145 aa).

The Gly-cisPro motif, important for rejection of L-amino acids motif lies at G137–P138.

Belongs to the DTD family. Homodimer.

It localises to the cytoplasm. The catalysed reaction is glycyl-tRNA(Ala) + H2O = tRNA(Ala) + glycine + H(+). It carries out the reaction a D-aminoacyl-tRNA + H2O = a tRNA + a D-alpha-amino acid + H(+). Functionally, an aminoacyl-tRNA editing enzyme that deacylates mischarged D-aminoacyl-tRNAs. Also deacylates mischarged glycyl-tRNA(Ala), protecting cells against glycine mischarging by AlaRS. Acts via tRNA-based rather than protein-based catalysis; rejects L-amino acids rather than detecting D-amino acids in the active site. By recycling D-aminoacyl-tRNA to D-amino acids and free tRNA molecules, this enzyme counteracts the toxicity associated with the formation of D-aminoacyl-tRNA entities in vivo and helps enforce protein L-homochirality. This Pseudomonas aeruginosa (strain UCBPP-PA14) protein is D-aminoacyl-tRNA deacylase.